A 205-amino-acid chain; its full sequence is Probable NAD(P)H dehydrogenase (quinone) FQR1-like 1 (205 aa).

In terms of domain architecture, Flavodoxin-like spans 5-192 (VYIVYYSMYG…GQAFHQGKYI (188 aa)). FMN is bound by residues 11–15 (SMYGH), 112–165 (IFYS…SPYG), and His-136. Tyr-13 is an NAD(+) binding site.

Belongs to the WrbA family. It depends on FMN as a cofactor.

Its subcellular location is the cell membrane. The enzyme catalyses a quinone + NADH + H(+) = a quinol + NAD(+). The catalysed reaction is a quinone + NADPH + H(+) = a quinol + NADP(+). Its function is as follows. Catalyzes the transfer of electrons from NADH and NADPH to reduce quinone to the hydroquinone state. The polypeptide is Probable NAD(P)H dehydrogenase (quinone) FQR1-like 1 (Arabidopsis thaliana (Mouse-ear cress)).